The following is a 226-amino-acid chain: MRVQLILHLEIPKEVCRSLEVDNYINNSIEINLKCEKKPTLYIKTHSIGSLKSILDDFFRCQNAAMEVYNLIKTYTIRNVTKDDLDDFLELYFKAYRGFDKYYYKKKKWARWYFKWLMKRDEDGFFVCEVNGKPVGFVACDCNWISNIEKREVAEIHEIFVDPDFRGRGIGTALINKAIEYAKKRGRRIVELWVGVENKGAIEFYKRLGFEEKEVVKGWLRMVKRI.

The region spanning 75–226 is the N-acetyltransferase domain; that stretch reads YTIRNVTKDD…KGWLRMVKRI (152 aa).

Belongs to the acetyltransferase family.

This is an uncharacterized protein from Methanocaldococcus jannaschii (strain ATCC 43067 / DSM 2661 / JAL-1 / JCM 10045 / NBRC 100440) (Methanococcus jannaschii).